Consider the following 623-residue polypeptide: (-)-alpha-pinene synthase 1, chloroplastic (623 aa).

Residues 1 to 52 constitute a chloroplast transit peptide; it reads MDLISVLPSASKSCVCLHKPLSSSTHKLKPFCKTIRILGMPRRWKFAGPSMS. Asp374, Asp378, and Asp526 together coordinate Mg(2+). A DDXXD motif motif is present at residues 374–378; the sequence is DDMYD.

Belongs to the terpene synthase family. Tpsd subfamily. The cofactor is Mg(2+). Mn(2+) serves as cofactor.

It is found in the plastid. It localises to the chloroplast. The enzyme catalyses (2E)-geranyl diphosphate = (1S,5S)-alpha-pinene + diphosphate. The catalysed reaction is (2E)-geranyl diphosphate = (1S,5S)-beta-pinene + diphosphate. It catalyses the reaction (2E)-geranyl diphosphate = (-)-beta-phellandrene + diphosphate. It participates in terpene metabolism; oleoresin biosynthesis. It functions in the pathway secondary metabolite biosynthesis; terpenoid biosynthesis. In terms of biological role, monoterpene synthase (TPS) involved in the biosynthesis of monoterpene natural products included in conifer oleoresin secretions and volatile emissions; these compounds contribute to biotic and abiotic stress defense against herbivores and pathogens. Catalyzes the conversion of (2E)-geranyl diphosphate (GPP) to (-)-alpha-pinene and (-)-beta-pinene, and, to a lower extent, to (-)-beta-phellandrene. This is (-)-alpha-pinene synthase 1, chloroplastic from Pinus banksiana (Jack pine).